A 616-amino-acid polypeptide reads, in one-letter code: Dihydroxy-acid dehydratase (616 aa).

Asp81 is a Mg(2+) binding site. Residue Cys122 participates in [2Fe-2S] cluster binding. Residues Asp123 and Lys124 each coordinate Mg(2+). N6-carboxylysine is present on Lys124. A [2Fe-2S] cluster-binding site is contributed by Cys195. Glu491 provides a ligand contact to Mg(2+). Ser517 functions as the Proton acceptor in the catalytic mechanism.

Belongs to the IlvD/Edd family. Homodimer. [2Fe-2S] cluster serves as cofactor. Requires Mg(2+) as cofactor.

The catalysed reaction is (2R)-2,3-dihydroxy-3-methylbutanoate = 3-methyl-2-oxobutanoate + H2O. It carries out the reaction (2R,3R)-2,3-dihydroxy-3-methylpentanoate = (S)-3-methyl-2-oxopentanoate + H2O. It functions in the pathway amino-acid biosynthesis; L-isoleucine biosynthesis; L-isoleucine from 2-oxobutanoate: step 3/4. Its pathway is amino-acid biosynthesis; L-valine biosynthesis; L-valine from pyruvate: step 3/4. In terms of biological role, functions in the biosynthesis of branched-chain amino acids. Catalyzes the dehydration of (2R,3R)-2,3-dihydroxy-3-methylpentanoate (2,3-dihydroxy-3-methylvalerate) into 2-oxo-3-methylpentanoate (2-oxo-3-methylvalerate) and of (2R)-2,3-dihydroxy-3-methylbutanoate (2,3-dihydroxyisovalerate) into 2-oxo-3-methylbutanoate (2-oxoisovalerate), the penultimate precursor to L-isoleucine and L-valine, respectively. In Yersinia pseudotuberculosis serotype I (strain IP32953), this protein is Dihydroxy-acid dehydratase.